The following is a 239-amino-acid chain: Uridylate kinase (239 aa).

Residue 12-15 (KLSG) participates in ATP binding. Residues 21 to 26 (GEQGFG) form an involved in allosteric activation by GTP region. Glycine 55 contacts UMP. The ATP site is built by glycine 56 and arginine 60. UMP is bound by residues aspartate 75 and 136–143 (TGNPYFST). Residues threonine 163, tyrosine 169, and aspartate 172 each coordinate ATP.

This sequence belongs to the UMP kinase family. Homohexamer.

It localises to the cytoplasm. The catalysed reaction is UMP + ATP = UDP + ADP. It functions in the pathway pyrimidine metabolism; CTP biosynthesis via de novo pathway; UDP from UMP (UMPK route): step 1/1. Its activity is regulated as follows. Allosterically activated by GTP. Inhibited by UTP. Its function is as follows. Catalyzes the reversible phosphorylation of UMP to UDP. This chain is Uridylate kinase, found in Koribacter versatilis (strain Ellin345).